The following is a 109-amino-acid chain: LSM2-LSM8 complex subunit LSM8 (109 aa).

In terms of domain architecture, Sm spans 1-70 (MSATLKDYLN…IALVGLIDAE (70 aa)).

Belongs to the snRNP Sm proteins family. Component of the heptameric LSM2-LSM8 complex that forms a seven-membered ring structure with a donut shape; an RNA strand can pass through the hole in the center of the ring structure. The LSm subunits are arranged in the order LSM8, LSM2, LSM3, LSM6, LSM5, LSM7 and LSM4. Component of the spliceosome U4/U6-U5 tri-snRNP complex composed of the U4, U6 and U5 snRNAs and at least PRP3, PRP4, PRP6, PRP8, PRP18, PRP31, PRP38, SNU13, SNU23, SNU66, SNU114, SPP381, SMB1, SMD1, SMD2, SMD3, SMX2, SMX3, LSM2, LSM3, LSM4, LSM5, LSM6, LSM7, LSM8, BRR2 and DIB1.

Its subcellular location is the nucleus. The protein resides in the cytoplasm. In terms of biological role, component of the nuclear LSM2-LSM8 complex, which is involved in spliceosome assembly. The LSM2-LSM8 complex plays a role in the biogenesis of the spliceosomal U4/U6-U5 tri-snRNP complex by accelerating PRP24-mediated annealing of U4/U6 di-snRNA. The LSM2-LSM8 complex binds U6 snRNA terminating with a non-cyclic 3' phosphate group. LSM2-LSM8 is probably also involved in degradation of nuclear pre-mRNA by targeting them for decapping. LSM2-LSM8 could be involved in processing of pre-tRNAs, pre-rRNAs and U3 snoRNA, although involvement may be indirect. The polypeptide is LSM2-LSM8 complex subunit LSM8 (LSM8) (Saccharomyces cerevisiae (strain ATCC 204508 / S288c) (Baker's yeast)).